The chain runs to 433 residues: Glutamate-1-semialdehyde 2,1-aminomutase (433 aa).

Lysine 271 carries the N6-(pyridoxal phosphate)lysine modification.

Belongs to the class-III pyridoxal-phosphate-dependent aminotransferase family. HemL subfamily. As to quaternary structure, homodimer. It depends on pyridoxal 5'-phosphate as a cofactor.

It is found in the cytoplasm. It catalyses the reaction (S)-4-amino-5-oxopentanoate = 5-aminolevulinate. It participates in porphyrin-containing compound metabolism; protoporphyrin-IX biosynthesis; 5-aminolevulinate from L-glutamyl-tRNA(Glu): step 2/2. Its pathway is porphyrin-containing compound metabolism; chlorophyll biosynthesis. The sequence is that of Glutamate-1-semialdehyde 2,1-aminomutase from Prochlorococcus marinus (strain MIT 9215).